A 248-amino-acid chain; its full sequence is MIEYRIEEAVAKYREFYEFKPVRESAGIEDVKSAIEHTNLKPFATPDDIKKLCLEARENRFHGVCVNPCYVKLAREELEGTDVKVVTVVGFPLGANETRTKAHEAIFAVESGADEIDMVINVGMLKAKEWEYVYEDIRSVVESVKGKVVKVIIETCYLDTEEKIAACVISKLAGAHFVKTSTGFGTGGATAEDVHLMKWIVGDEMGVKASGGIRTFEDAVKMIMYGADRIGTSSGVKIVQGGEERYGG.

Asp-117 serves as the catalytic Proton donor/acceptor. The active-site Schiff-base intermediate with acetaldehyde is the Lys-179. Lys-208 functions as the Proton donor/acceptor in the catalytic mechanism.

It belongs to the DeoC/FbaB aldolase family. DeoC type 1 subfamily.

The protein localises to the cytoplasm. The enzyme catalyses 2-deoxy-D-ribose 5-phosphate = D-glyceraldehyde 3-phosphate + acetaldehyde. Its pathway is carbohydrate degradation; 2-deoxy-D-ribose 1-phosphate degradation; D-glyceraldehyde 3-phosphate and acetaldehyde from 2-deoxy-alpha-D-ribose 1-phosphate: step 2/2. Functionally, catalyzes a reversible aldol reaction between acetaldehyde and D-glyceraldehyde 3-phosphate to generate 2-deoxy-D-ribose 5-phosphate. This Thermotoga maritima (strain ATCC 43589 / DSM 3109 / JCM 10099 / NBRC 100826 / MSB8) protein is Deoxyribose-phosphate aldolase.